The sequence spans 483 residues: 3-isopropylmalate dehydratase large subunit (483 aa).

Residues C352, C412, and C415 each coordinate [4Fe-4S] cluster.

This sequence belongs to the aconitase/IPM isomerase family. LeuC type 1 subfamily. In terms of assembly, heterodimer of LeuC and LeuD. It depends on [4Fe-4S] cluster as a cofactor.

It carries out the reaction (2R,3S)-3-isopropylmalate = (2S)-2-isopropylmalate. The protein operates within amino-acid biosynthesis; L-leucine biosynthesis; L-leucine from 3-methyl-2-oxobutanoate: step 2/4. Catalyzes the isomerization between 2-isopropylmalate and 3-isopropylmalate, via the formation of 2-isopropylmaleate. This is 3-isopropylmalate dehydratase large subunit from Paenarthrobacter aurescens (strain TC1).